The primary structure comprises 495 residues: Aspartyl/glutamyl-tRNA(Asn/Gln) amidotransferase subunit B (495 aa).

This sequence belongs to the GatB/GatE family. GatB subfamily. As to quaternary structure, heterotrimer of A, B and C subunits.

The catalysed reaction is L-glutamyl-tRNA(Gln) + L-glutamine + ATP + H2O = L-glutaminyl-tRNA(Gln) + L-glutamate + ADP + phosphate + H(+). The enzyme catalyses L-aspartyl-tRNA(Asn) + L-glutamine + ATP + H2O = L-asparaginyl-tRNA(Asn) + L-glutamate + ADP + phosphate + 2 H(+). Functionally, allows the formation of correctly charged Asn-tRNA(Asn) or Gln-tRNA(Gln) through the transamidation of misacylated Asp-tRNA(Asn) or Glu-tRNA(Gln) in organisms which lack either or both of asparaginyl-tRNA or glutaminyl-tRNA synthetases. The reaction takes place in the presence of glutamine and ATP through an activated phospho-Asp-tRNA(Asn) or phospho-Glu-tRNA(Gln). The chain is Aspartyl/glutamyl-tRNA(Asn/Gln) amidotransferase subunit B from Prochlorococcus marinus (strain MIT 9313).